The primary structure comprises 82 residues: Small ribosomal subunit protein bS18 (82 aa).

The interval methionine 1–alanine 24 is disordered.

It belongs to the bacterial ribosomal protein bS18 family. Part of the 30S ribosomal subunit. Forms a tight heterodimer with protein bS6.

Functionally, binds as a heterodimer with protein bS6 to the central domain of the 16S rRNA, where it helps stabilize the platform of the 30S subunit. This is Small ribosomal subunit protein bS18 from Corynebacterium jeikeium (strain K411).